A 171-amino-acid chain; its full sequence is uncharacterized protein (171 aa).

Transmembrane regions (helical) follow at residues 13-35 (VGAS…IATA) and 50-72 (ATVL…AYVV).

It localises to the cell membrane. This is an uncharacterized protein from Treponema pallidum (strain Nichols).